Reading from the N-terminus, the 202-residue chain is Translation initiation factor IF-3 (202 aa).

Belongs to the IF-3 family. In terms of assembly, monomer.

It localises to the cytoplasm. Its function is as follows. IF-3 binds to the 30S ribosomal subunit and shifts the equilibrium between 70S ribosomes and their 50S and 30S subunits in favor of the free subunits, thus enhancing the availability of 30S subunits on which protein synthesis initiation begins. This is Translation initiation factor IF-3 from Prochlorococcus marinus (strain MIT 9211).